The following is a 248-amino-acid chain: TPR repeat-containing protein slr0751 (248 aa).

4 TPR repeats span residues 61–94 (PEAI…SPDS), 95–128 (PETH…DRYY), 129–162 (IPPY…DPNR), and 163–196 (YKAY…RPDY).

This is TPR repeat-containing protein slr0751 from Synechocystis sp. (strain ATCC 27184 / PCC 6803 / Kazusa).